Reading from the N-terminus, the 361-residue chain is DNA replication and repair protein RecF (361 aa).

Residue 30 to 37 (GPNGSGKT) participates in ATP binding.

The protein belongs to the RecF family.

The protein localises to the cytoplasm. The RecF protein is involved in DNA metabolism; it is required for DNA replication and normal SOS inducibility. RecF binds preferentially to single-stranded, linear DNA. It also seems to bind ATP. The protein is DNA replication and repair protein RecF of Yersinia pseudotuberculosis serotype O:1b (strain IP 31758).